A 283-amino-acid chain; its full sequence is Non-selective voltage-gated ion channel VDAC3 (283 aa).

N-acetylcysteine is present on cysteine 2. Position 4 is a phosphothreonine (threonine 4). 3 positions are modified to N6-acetyllysine: lysine 12, lysine 15, and lysine 20. 2 beta stranded membrane-spanning segments follow: residues 26–35 and 39–47; these read MVKIDLRTKS and VEFSTSGHA. A Glycyl lysine isopeptide (Lys-Gly) (interchain with G-Cter in ubiquitin) cross-link involves residue lysine 53. 3 consecutive transmembrane segments (beta stranded) span residues 54–64, 69–76, and 80–89; these read ASGNLETKYKV, LTFTQKWN, and TLGTEISLEN. Position 90 is an N6-acetyllysine (lysine 90). A beta stranded transmembrane segment spans residues 95 to 104; it reads LKLTLDTIFV. Glycyl lysine isopeptide (Lys-Gly) (interchain with G-Cter in ubiquitin) cross-links involve residues lysine 109 and lysine 110. A run of 10 beta stranded transmembrane segments spans residues 111–120, 123–130, 137–145, 150–158, 163–175, 178–185, 189–198, 202–211, 218–227, and 231–238; these read SGKLKASYKR, FSLGSNVD, TIYGWAVLA, LAGYQMSFD, KLSQ…GYKA, FQLHTHVN, EFGGSIYQKV, IETSINLAWT, RFGIAAKYKL, and TSLSAKVN. Serine 241 carries the post-translational modification Phosphoserine. Residues 242–244 and 260–264 each bind NAD(+); these read LIG and SALID. 2 beta stranded membrane-spanning segments follow: residues 242–251 and 254–263; these read LIGLGYTQTL and GVKLTLSALI. Position 266 is an N6-acetyllysine; alternate (lysine 266). A Glycyl lysine isopeptide (Lys-Gly) (interchain with G-Cter in ubiquitin); alternate cross-link involves residue lysine 266. Residues 273–282 form a beta stranded membrane-spanning segment; sequence HKVGLGFELE.

It belongs to the eukaryotic mitochondrial porin family. In terms of assembly, interacts with ARMC12 in a TBC1D21-dependent manner. Interacts with MISFA. In terms of processing, ubiquitinated by PRKN during mitophagy, leading to its degradation and enhancement of mitophagy. Deubiquitinated by USP30.

The protein resides in the mitochondrion outer membrane. The protein localises to the membrane. It catalyses the reaction chloride(in) = chloride(out). The enzyme catalyses K(+)(in) = K(+)(out). Non-selective voltage-gated ion channel that mediates the transport of anions and cations through the mitochondrion outer membrane and plasma membrane. Forms a high-conducting channel with a stable open state and a voltage-induced closure with a mild preference for anions over cations. Involved in male fertility and sperm mitochondrial sheath formation. This Oryctolagus cuniculus (Rabbit) protein is Non-selective voltage-gated ion channel VDAC3.